Consider the following 165-residue polypeptide: UBA-like domain-containing protein 2-B (165 aa).

The disordered stretch occupies residues 119–165 (QQPVWLPPASPTAHLHHHHHHPQPVWPPNSQPTGGPQKAMAAMDGQR).

The protein belongs to the UBALD family.

The polypeptide is UBA-like domain-containing protein 2-B (ubald2-b) (Xenopus laevis (African clawed frog)).